We begin with the raw amino-acid sequence, 263 residues long: MNIYQTYEPSQIRELIRKKEITGPTAGLAEGYAQANLMIVKKELAFDFLLFCQRNPAACPLLDVLEPGDPVPRKSAPKADIRTDFPKYRIYRKGILQEEVSDISAYWEDDMVAFLIGCSFTFEHALMLNDIPVRHIENGHNVPMYQTNIACKRAGVFHGPMVVSMRPIPAHQITRSVQVTSRFPSVHGGPIHIGDPAMIGIANVDQPDFGETSVIKEGEVPVFWACGVTPQAVVMHTKPEIAITHAPGHMFITDQRDQQLGVL.

The protein belongs to the D-glutamate cyclase family.

In Bacillus pumilus (strain SAFR-032), this protein is Putative hydro-lyase BPUM_0381.